A 35-amino-acid chain; its full sequence is Photosystem II reaction center protein T (35 aa).

Residues 3–23 (ALVYTFLLVGTLGIIFFAIFF) traverse the membrane as a helical segment.

Belongs to the PsbT family. PSII is composed of 1 copy each of membrane proteins PsbA, PsbB, PsbC, PsbD, PsbE, PsbF, PsbH, PsbI, PsbJ, PsbK, PsbL, PsbM, PsbT, PsbY, PsbZ, Psb30/Ycf12, at least 3 peripheral proteins of the oxygen-evolving complex and a large number of cofactors. It forms dimeric complexes.

The protein localises to the plastid. The protein resides in the chloroplast thylakoid membrane. Found at the monomer-monomer interface of the photosystem II (PS II) dimer, plays a role in assembly and dimerization of PSII. PSII is a light-driven water plastoquinone oxidoreductase, using light energy to abstract electrons from H(2)O, generating a proton gradient subsequently used for ATP formation. This is Photosystem II reaction center protein T from Staurastrum punctulatum (Green alga).